The sequence spans 362 residues: 3-dehydroquinate synthase (362 aa).

NAD(+) is bound by residues 71-76 (DGEQYK), 105-109 (GVVGD), 129-130 (TT), Lys142, Lys151, and 169-172 (CLKT). Residues Glu184, His247, and His264 each contribute to the Zn(2+) site.

Belongs to the sugar phosphate cyclases superfamily. Dehydroquinate synthase family. Co(2+) serves as cofactor. Zn(2+) is required as a cofactor. Requires NAD(+) as cofactor.

It is found in the cytoplasm. The catalysed reaction is 7-phospho-2-dehydro-3-deoxy-D-arabino-heptonate = 3-dehydroquinate + phosphate. It participates in metabolic intermediate biosynthesis; chorismate biosynthesis; chorismate from D-erythrose 4-phosphate and phosphoenolpyruvate: step 2/7. Functionally, catalyzes the conversion of 3-deoxy-D-arabino-heptulosonate 7-phosphate (DAHP) to dehydroquinate (DHQ). The polypeptide is 3-dehydroquinate synthase (Escherichia coli (strain K12 / MC4100 / BW2952)).